Here is a 234-residue protein sequence, read N- to C-terminus: NAD-dependent protein deacylase (234 aa).

The Deacetylase sirtuin-type domain maps to 1 to 234 (MTKQVRIVVL…LVPHYLAQFL (234 aa)). 12–31 (GAGISAESGIRTFRATDGLW) contributes to the NAD(+) binding site. Residues Y56 and R59 each contribute to the substrate site. 93 to 96 (QNVD) is a binding site for NAD(+). Residue H111 is the Proton acceptor of the active site. Zn(2+) contacts are provided by C119 and C138. Residues 178–180 (GTS), 204–206 (NLE), and A222 contribute to the NAD(+) site.

It belongs to the sirtuin family. Class III subfamily. Zn(2+) is required as a cofactor.

Its subcellular location is the cytoplasm. It carries out the reaction N(6)-acetyl-L-lysyl-[protein] + NAD(+) + H2O = 2''-O-acetyl-ADP-D-ribose + nicotinamide + L-lysyl-[protein]. The enzyme catalyses N(6)-succinyl-L-lysyl-[protein] + NAD(+) + H2O = 2''-O-succinyl-ADP-D-ribose + nicotinamide + L-lysyl-[protein]. NAD-dependent lysine deacetylase and desuccinylase that specifically removes acetyl and succinyl groups on target proteins. Modulates the activities of several proteins which are inactive in their acylated form. In Pasteurella multocida (strain Pm70), this protein is NAD-dependent protein deacylase.